We begin with the raw amino-acid sequence, 3414 residues long: Genome polyprotein (3414 aa).

Residues 1 to 27 (MAGKAILKGKGGGPPRRVSKETAKKTR) are disordered. The Cytoplasmic segment spans residues 1 to 98 (MAGKAILKGK…LQKRGKRRST (98 aa)). Residues 98 to 116 (TTDWTGWLLVAMLLSIALA) constitute a propeptide, ER anchor for the capsid protein C, removed in mature form by serine protease NS3. Residues 99-119 (TDWTGWLLVAMLLSIALAATV) form a helical membrane-spanning segment. Over 120–242 (RKEGDGTTVI…HLTRVEGWVW (123 aa)) the chain is Extracellular. The N-linked (GlcNAc...) asparagine; by host glycan is linked to N144. The chain crosses the membrane as a helical span at residues 243-260 (KNKSLTLAVVVIVWMTVE). A topological domain (cytoplasmic) is located at residue S261. A helical transmembrane segment spans residues 262 to 280 (AVTRIVIVSALLCLAPAYA). The Extracellular segment spans residues 281–727 (SRCTHLENRD…HTVLGGAFNS (447 aa)). 6 disulfide bridges follow: C283/C310, C340/C396, C340/C401, C354/C385, C372/C396, and C372/C401. Residues 378-391 (DRGWGNHCGLFGKG) form a fusion peptide region. N-linked (GlcNAc...) asparagine; by host glycosylation is present at N434. Intrachain disulfides connect C466-C570 and C587-C618. Residues 728 to 748 (VFGGVGFLPRILLGISLAWLG) form a helical membrane-spanning segment. The Cytoplasmic segment spans residues 749–755 (LNMRNPT). A helical transmembrane segment spans residues 756 to 776 (MSMSFLLAGGLVLTMTLGVGA). The Extracellular segment spans residues 777–1132 (DVGCAVDTER…RSMVVADNGE (356 aa)). 6 disulfide bridges follow: C780-C791, C831-C920, C955-C1000, C1057-C1106, C1068-C1090, and C1089-C1093. N-linked (GlcNAc...) asparagine; by host glycans are attached at residues N861, N983, and N999. The helical transmembrane segment at 1133–1153 (LLSEGGIPGIVAVFVVLEYII) threads the bilayer. Residues 1154–1158 (RKRPS) lie on the Cytoplasmic side of the membrane. A helical transmembrane segment spans residues 1159–1179 (AGLTVVWGGVVVLALLVTGMV). At 1180 to 1187 (TLQSMLRY) the chain is on the lumenal side. The chain crosses the membrane as a helical span at residues 1188 to 1208 (VIAVGVTFHLELGPEIVALML). Topologically, residues 1209-1236 (LQAVFELRVGLLGAFVLRRSLTTREVVT) are cytoplasmic. Residues 1237 to 1257 (IYFLLLVLELGLPSANLEALW) form a helical membrane-spanning segment. Residues 1258–1293 (GWADALAMGAMIFRACTAEGKTGLGLLLVALMTQQN) are Lumenal-facing. Residues 1294 to 1314 (AVIVHQGLVIFLSVASACSVW) form a helical membrane-spanning segment. Over 1315–1363 (KLLRGQREQKGLSWIVPLAGRLGGKGSGIRLLAFWELASRRDRRSFSEP) the chain is Cytoplasmic. Residues 1364 to 1381 (LTVVGVMLTLASGMMRHT) form a helical membrane-spanning segment. Position 1382 (S1382) is a topological domain, lumenal. A helical membrane pass occupies residues 1383 to 1403 (QEALCALAAASFLLLMLVLGT). Topologically, residues 1404–1454 (RKMQLVAEWSGCVEWHPDLADEGGEISLRVRQDALGNFHLTELEKEERMMA) are cytoplasmic. Residues 1410–1449 (AEWSGCVEWHPDLADEGGEISLRVRQDALGNFHLTELEKE) form an interacts with and activates NS3 protease region. Residues 1455 to 1475 (FWLLAGLTASALHWTGILVVM) constitute an intramembrane region (helical). Topologically, residues 1476 to 2160 (GLWTMSEMLR…KMAERDAPEA (685 aa)) are cytoplasmic. The Peptidase S7 domain occupies 1490–1669 (SDLVFSGQSG…EVEKSRPNLP (180 aa)). Active-site charge relay system; for serine protease NS3 activity residues include H1543, D1567, and S1627. A Helicase ATP-binding domain is found at 1675–1831 (TGWTSKGTIT…ESNGAITSEE (157 aa)). ATP is bound at residue 1688-1695 (MHPGSGKT). The DEAH box signature appears at 1779-1782 (DEAH). Positions 1841 to 2000 (DGFDWITEYE…TLRGPVATFY (160 aa)) constitute a Helicase C-terminal domain. N6-acetyllysine; by host is present on K1883. Residues 2161–2181 (FLTMVEMVVLGLATLGAVWCL) form a helical membrane-spanning segment. The Lumenal portion of the chain corresponds to 2182 to 2189 (VLRTSISR). The segment at residues 2190 to 2210 (MMLGTMVLLVSLALLWAGGVG) is an intramembrane region (helical). A topological domain (lumenal) is located at residue Y2211. Residues 2212–2232 (GSMAGVALVFYTLLTVLQPEA) form a helical membrane-spanning segment. Residues 2233 to 2244 (GKQRSSDDNKLA) are Cytoplasmic-facing. A helical membrane pass occupies residues 2245 to 2265 (YFLLTLCSLAGLVAANEMGFL). Residues 2266-2299 (EKTKADLSAVLWSEREEPRVWSEWTNIDIQPAKS) lie on the Lumenal side of the membrane. Positions 2300–2320 (WGTYVLVVSLFTPYIIHQLQT) form an intramembrane region, helical. Topologically, residues 2321–2343 (RIQQLVNSAVASGAQAMRDLGGG) are lumenal. The helical intramembrane region spans 2344 to 2364 (TPFFGVAGHVLTLGVVSLVGA). At 2365–2368 (TPTS) the chain is on the lumenal side. The helical transmembrane segment at 2369–2389 (LVVGVGLAAFHLAIVVSGLEA) threads the bilayer. Over 2390–2432 (ELTQRAHKVFFSAMVRNPMVDGDVINPFGDGEVKPALYERKMS) the chain is Cytoplasmic. A helical transmembrane segment spans residues 2433 to 2453 (LILAMILCFMSVVLNRTVPAV). Topologically, residues 2454 to 2477 (TEASAVGLAAAGQLIRPEADTLWT) are lumenal. The helical transmembrane segment at 2478–2498 (MPVACGLSGVVRGSLWGFLPL) threads the bilayer. At 2499–3414 (GHRLWLRTSG…WELKVESSII (916 aa)) the chain is on the cytoplasmic side. The 265-residue stretch at 2512–2776 (GGSEGDTLGD…EMDLGVGTRC (265 aa)) folds into the mRNA cap 0-1 NS5-type MT domain. Residue S2567 coordinates S-adenosyl-L-methionine. The residue at position 2567 (S2567) is a Phosphoserine. K2572 serves as the catalytic For 2'-O-MTase activity. S-adenosyl-L-methionine-binding residues include G2597, W2598, T2615, I2616, and V2643. D2657 (for 2'-O-MTase activity) is an active-site residue. I2658 serves as a coordination point for S-adenosyl-L-methionine. Catalysis depends on for 2'-O-MTase activity residues K2694 and E2730. An interaction with host SCRIB region spans residues 2730-2734 (EMYYS). Y2732 contacts S-adenosyl-L-methionine. 4 residues coordinate Zn(2+): E2950, H2954, C2959, and C2962. The region spanning 3040–3189 (GLFYADDTAG…RPIDDRFSKA (150 aa)) is the RdRp catalytic domain. Zn(2+) is bound by residues H3224, C3240, and C3359.

In the N-terminal section; belongs to the class I-like SAM-binding methyltransferase superfamily. mRNA cap 0-1 NS5-type methyltransferase family. In terms of assembly, homodimer. Forms heterodimers with envelope protein E in the endoplasmic reticulum and Golgi. As to quaternary structure, homodimer; in the endoplasmic reticulum and Golgi. In terms of assembly, forms homodimers as well as homohexamers. NS1 may interact with NS4A. Forms a heterodimer with serine protease NS3. May form homooligomers. As to quaternary structure, forms a heterodimer with NS2B. Interacts with NS4B. Interacts with unphosphorylated RNA-directed RNA polymerase NS5; this interaction stimulates RNA-directed RNA polymerase NS5 guanylyltransferase activity. In terms of assembly, interacts with serine protease NS3. Interacts with host STAT2; this interaction inhibits the phosphorylation of the latter, and, when all viral proteins are present (polyprotein), targets STAT2 for degradation. Specific enzymatic cleavages in vivo yield mature proteins. Cleavages in the lumen of endoplasmic reticulum are performed by host signal peptidase, whereas cleavages in the cytoplasmic side are performed by serine protease NS3. Signal cleavage at the 2K-4B site requires a prior NS3 protease-mediated cleavage at the 4A-2K site. In terms of processing, cleaved in post-Golgi vesicles by a host furin, releasing the mature small envelope protein M, and peptide pr. This cleavage is incomplete as up to 30% of viral particles still carry uncleaved prM. Post-translationally, N-glycosylated. N-glycosylated. The excreted form is glycosylated and this is required for efficient secretion of the protein from infected cells. In terms of processing, acetylated by host KAT5. Acetylation modulates NS3 RNA-binding and unwinding activities and plays an important positive role for viral replication. Post-translationally, phosphorylated on serines residues. This phosphorylation may trigger NS5 nuclear localization.

It localises to the virion. The protein localises to the host nucleus. Its subcellular location is the host cytoplasm. The protein resides in the host perinuclear region. It is found in the secreted. It localises to the virion membrane. The protein localises to the host endoplasmic reticulum membrane. It carries out the reaction Selective hydrolysis of -Xaa-Xaa-|-Yaa- bonds in which each of the Xaa can be either Arg or Lys and Yaa can be either Ser or Ala.. It catalyses the reaction RNA(n) + a ribonucleoside 5'-triphosphate = RNA(n+1) + diphosphate. The catalysed reaction is a ribonucleoside 5'-triphosphate + H2O = a ribonucleoside 5'-diphosphate + phosphate + H(+). The enzyme catalyses ATP + H2O = ADP + phosphate + H(+). It carries out the reaction a 5'-end (5'-triphosphoguanosine)-ribonucleoside in mRNA + S-adenosyl-L-methionine = a 5'-end (N(7)-methyl 5'-triphosphoguanosine)-ribonucleoside in mRNA + S-adenosyl-L-homocysteine. It catalyses the reaction a 5'-end (N(7)-methyl 5'-triphosphoguanosine)-ribonucleoside in mRNA + S-adenosyl-L-methionine = a 5'-end (N(7)-methyl 5'-triphosphoguanosine)-(2'-O-methyl-ribonucleoside) in mRNA + S-adenosyl-L-homocysteine + H(+). Functionally, plays a role in virus budding by binding to the cell membrane and gathering the viral RNA into a nucleocapsid that forms the core of a mature virus particle. During virus entry, may induce genome penetration into the host cytoplasm after hemifusion induced by the surface proteins. Can migrate to the cell nucleus where it modulates host functions. Its function is as follows. Inhibits RNA silencing by interfering with host Dicer. In terms of biological role, prevents premature fusion activity of envelope proteins in trans-Golgi by binding to envelope protein E at pH6.0. After virion release in extracellular space, gets dissociated from E dimers. Acts as a chaperone for envelope protein E during intracellular virion assembly by masking and inactivating envelope protein E fusion peptide. prM is the only viral peptide matured by host furin in the trans-Golgi network probably to avoid catastrophic activation of the viral fusion activity in acidic Golgi compartment prior to virion release. prM-E cleavage is inefficient, and many virions are only partially matured. These uncleaved prM would play a role in immune evasion. Functionally, may play a role in virus budding. Exerts cytotoxic effects by activating a mitochondrial apoptotic pathway through M ectodomain. May display a viroporin activity. Its function is as follows. Binds to host cell surface receptor and mediates fusion between viral and cellular membranes. Envelope protein is synthesized in the endoplasmic reticulum in the form of heterodimer with protein prM. They play a role in virion budding in the ER, and the newly formed immature particle is covered with 60 spikes composed of heterodimer between precursor prM and envelope protein E. The virion is transported to the Golgi apparatus where the low pH causes dissociation of PrM-E heterodimers and formation of E homodimers. prM-E cleavage is inefficient, and many virions are only partially matured. These uncleaved prM would play a role in immune evasion. In terms of biological role, involved in immune evasion, pathogenesis and viral replication. Once cleaved off the polyprotein, is targeted to three destinations: the viral replication cycle, the plasma membrane and the extracellular compartment. Essential for viral replication. Required for formation of the replication complex and recruitment of other non-structural proteins to the ER-derived membrane structures. Excreted as a hexameric lipoparticle that plays a role against host immune response. Antagonizing the complement function. Binds to the host macrophages and dendritic cells. Inhibits signal transduction originating from Toll-like receptor 3 (TLR3). Component of the viral RNA replication complex that functions in virion assembly and antagonizes the host immune response. Functionally, required cofactor for the serine protease function of NS3. May have membrane-destabilizing activity and form viroporins. Its function is as follows. Displays three enzymatic activities: serine protease, NTPase and RNA helicase. NS3 serine protease, in association with NS2B, performs its autocleavage and cleaves the polyprotein at dibasic sites in the cytoplasm: C-prM, NS2A-NS2B, NS2B-NS3, NS3-NS4A, NS4A-2K and NS4B-NS5. NS3 RNA helicase binds RNA and unwinds dsRNA in the 3' to 5' direction. In terms of biological role, regulates the ATPase activity of the NS3 helicase activity. NS4A allows NS3 helicase to conserve energy during unwinding. Functions as a signal peptide for NS4B and is required for the interferon antagonism activity of the latter. Functionally, induces the formation of ER-derived membrane vesicles where the viral replication takes place. Inhibits interferon (IFN)-induced host STAT1 phosphorylation and nuclear translocation, thereby preventing the establishment of cellular antiviral state by blocking the IFN-alpha/beta pathway. Inhibits STAT2 translocation in the nucleus after IFN-alpha treatment. Its function is as follows. Replicates the viral (+) and (-) RNA genome, and performs the capping of genomes in the cytoplasm. NS5 methylates viral RNA cap at guanine N-7 and ribose 2'-O positions. Besides its role in RNA genome replication, also prevents the establishment of cellular antiviral state by blocking the interferon-alpha/beta (IFN-alpha/beta) signaling pathway. Inhibits host TYK2 and STAT2 phosphorylation, thereby preventing activation of JAK-STAT signaling pathway. In Homo sapiens (Human), this protein is Genome polyprotein.